A 244-amino-acid polypeptide reads, in one-letter code: Ureidoacrylate amidohydrolase RutB (244 aa).

The Proton acceptor role is filled by Asp38. The active site involves Lys147. Cys180 functions as the Nucleophile in the catalytic mechanism.

This sequence belongs to the isochorismatase family. RutB subfamily.

The catalysed reaction is (Z)-3-ureidoacrylate + H2O + H(+) = (Z)-3-aminoacrylate + NH4(+) + CO2. The enzyme catalyses (Z)-3-ureidoacrylate + H2O = (Z)-3-aminoacrylate + carbamate + H(+). It carries out the reaction (Z)-2-methylureidoacrylate + H2O + H(+) = (Z)-2-methylaminoacrylate + NH4(+) + CO2. Functionally, hydrolyzes ureidoacrylate to form aminoacrylate and carbamate. The carbamate hydrolyzes spontaneously, thereby releasing one of the nitrogen atoms of the pyrimidine ring as ammonia and one of its carbon atoms as CO2. This Escherichia coli O55:H7 (strain CB9615 / EPEC) protein is Ureidoacrylate amidohydrolase RutB.